We begin with the raw amino-acid sequence, 248 residues long: ATP synthase subunit a, chloroplastic (248 aa).

A run of 5 helical transmembrane segments spans residues 37–57 (AQVL…AFVT), 96–116 (VPFI…GALF), 135–155 (INTT…AGLH), 200–220 (LVVA…MMFL), and 221–241 (GLFT…AYIG).

This sequence belongs to the ATPase A chain family. F-type ATPases have 2 components, CF(1) - the catalytic core - and CF(0) - the membrane proton channel. CF(1) has five subunits: alpha(3), beta(3), gamma(1), delta(1), epsilon(1). CF(0) has four main subunits: a, b, b' and c.

Its subcellular location is the plastid. It localises to the chloroplast thylakoid membrane. In terms of biological role, key component of the proton channel; it plays a direct role in the translocation of protons across the membrane. The sequence is that of ATP synthase subunit a, chloroplastic from Psilotum nudum (Whisk fern).